Reading from the N-terminus, the 345-residue chain is Anthranilate phosphoribosyltransferase (345 aa).

5-phospho-alpha-D-ribose 1-diphosphate-binding positions include glycine 84, 87–88 (GD), threonine 92, 94–97 (NIST), 112–120 (KHGNRSVSS), and serine 124. Glycine 84 contributes to the anthranilate binding site. Serine 96 is a Mg(2+) binding site. Residue asparagine 115 participates in anthranilate binding. Arginine 170 contributes to the anthranilate binding site. Positions 229 and 230 each coordinate Mg(2+).

It belongs to the anthranilate phosphoribosyltransferase family. As to quaternary structure, homodimer. Mg(2+) serves as cofactor.

The catalysed reaction is N-(5-phospho-beta-D-ribosyl)anthranilate + diphosphate = 5-phospho-alpha-D-ribose 1-diphosphate + anthranilate. It participates in amino-acid biosynthesis; L-tryptophan biosynthesis; L-tryptophan from chorismate: step 2/5. In terms of biological role, catalyzes the transfer of the phosphoribosyl group of 5-phosphorylribose-1-pyrophosphate (PRPP) to anthranilate to yield N-(5'-phosphoribosyl)-anthranilate (PRA). This is Anthranilate phosphoribosyltransferase from Xanthomonas campestris pv. campestris (strain B100).